Here is a 699-residue protein sequence, read N- to C-terminus: Elongation factor G (699 aa).

Residues 8 to 286 (EKLRNIGIVA…AVIVTYPLPI (279 aa)) enclose the tr-type G domain. GTP-binding positions include 17-24 (AHIDAGKT), 84-88 (DTPGH), and 138-141 (NKMD).

This sequence belongs to the TRAFAC class translation factor GTPase superfamily. Classic translation factor GTPase family. EF-G/EF-2 subfamily.

It localises to the cytoplasm. In terms of biological role, catalyzes the GTP-dependent ribosomal translocation step during translation elongation. During this step, the ribosome changes from the pre-translocational (PRE) to the post-translocational (POST) state as the newly formed A-site-bound peptidyl-tRNA and P-site-bound deacylated tRNA move to the P and E sites, respectively. Catalyzes the coordinated movement of the two tRNA molecules, the mRNA and conformational changes in the ribosome. This Aquifex pyrophilus protein is Elongation factor G (fusA).